The following is a 190-amino-acid chain: Putative manganese efflux pump MntP (190 aa).

The next 5 helical transmembrane spans lie at 37-57 (LILAGIFGVFQALMPVIGWGI), 64-84 (LSFIRAIDHWVAFLLLAGVGA), 111-131 (LILGLATSIDALAVGMGMAFV), 135-155 (IITLALAMGLTTFVLSLVGAW), and 164-184 (FGGWATVIGGLVLIGLGGNIL).

This sequence belongs to the MntP (TC 9.B.29) family.

The protein localises to the cell membrane. Functionally, probably functions as a manganese efflux pump. The protein is Putative manganese efflux pump MntP of Corynebacterium efficiens (strain DSM 44549 / YS-314 / AJ 12310 / JCM 11189 / NBRC 100395).